The primary structure comprises 295 residues: Fructose-bisphosphate aldolase class 1 (295 aa).

Residue Glu-176 is the Proton acceptor of the active site. The active-site Schiff-base intermediate with dihydroxyacetone-P is Lys-213.

This sequence belongs to the class I fructose-bisphosphate aldolase family.

It carries out the reaction beta-D-fructose 1,6-bisphosphate = D-glyceraldehyde 3-phosphate + dihydroxyacetone phosphate. It participates in carbohydrate degradation; glycolysis; D-glyceraldehyde 3-phosphate and glycerone phosphate from D-glucose: step 4/4. The protein is Fructose-bisphosphate aldolase class 1 of Treponema denticola (strain ATCC 35405 / DSM 14222 / CIP 103919 / JCM 8153 / KCTC 15104).